The sequence spans 155 residues: MNYLKLTFDKLEVGEINDLVAHESCGAISLFVGTTRDNFDGKTVVLLEYEAYEAMALKTMNQICEELRARWPDIKHIGIHHRLGTVPVKEASVVIAVSSPHRKSSLEAVHFAIDELKKSVPVWKKEQYAEGEGCSEWKENKECSWSKSHRDNHIL.

Substrate-binding positions include 101–102, K117, and 124–126; these read HR and KKE.

Belongs to the MoaE family. MOCS2B subfamily. As to quaternary structure, heterotetramer; composed of 2 small (MOCS2A) and 2 large (MOCS2B) subunits.

It localises to the cytoplasm. The catalysed reaction is 2 [molybdopterin-synthase sulfur-carrier protein]-C-terminal-Gly-aminoethanethioate + cyclic pyranopterin phosphate + H2O = molybdopterin + 2 [molybdopterin-synthase sulfur-carrier protein]-C-terminal Gly-Gly + 2 H(+). It functions in the pathway cofactor biosynthesis; molybdopterin biosynthesis. Functionally, catalytic subunit of the molybdopterin synthase complex, a complex that catalyzes the conversion of precursor Z into molybdopterin. Acts by mediating the incorporation of 2 sulfur atoms from thiocarboxylated MOCS2A into precursor Z to generate a dithiolene group. The protein is Molybdopterin synthase catalytic subunit 2 of Aedes aegypti (Yellowfever mosquito).